A 210-amino-acid polypeptide reads, in one-letter code: MADKSEMKKLLLTPVLGNNPIALQVLGVCSALAVTSQMKTAFVMTLAVTAVTAFSNLFISLIRNQIPNSVRIIAQMAVIASLVIVVDQVLKAYAYEISKQLSVFVGLIITNCIVMGRAEAYAMKSAPLPSFLDGIGNGLGYGAVLLTVATVREILGSGTWFGIELLPLVNNGGWYVPNGLLLLPPSAFFIIGLIIWGVRTRDPKQVEAKD.

Helical transmembrane passes span 42–62, 72–92, 103–123, 131–151, and 178–198; these read FVMT…ISLI, IIAQ…VLKA, VFVG…AYAM, FLDG…VATV, and NGLL…IWGV.

This sequence belongs to the NqrDE/RnfAE family. In terms of assembly, composed of six subunits; NqrA, NqrB, NqrC, NqrD, NqrE and NqrF.

It localises to the cell inner membrane. The enzyme catalyses a ubiquinone + n Na(+)(in) + NADH + H(+) = a ubiquinol + n Na(+)(out) + NAD(+). In terms of biological role, NQR complex catalyzes the reduction of ubiquinone-1 to ubiquinol by two successive reactions, coupled with the transport of Na(+) ions from the cytoplasm to the periplasm. NqrA to NqrE are probably involved in the second step, the conversion of ubisemiquinone to ubiquinol. This is Na(+)-translocating NADH-quinone reductase subunit D from Aeromonas salmonicida (strain A449).